Here is a 242-residue protein sequence, read N- to C-terminus: LexA repressor (242 aa).

Positions 26-46 (FEEMKAALNLKSKSGIHRLIS) form a DNA-binding region, H-T-H motif. Residues serine 163 and lysine 201 each act as for autocatalytic cleavage activity in the active site.

Belongs to the peptidase S24 family. Homodimer.

The catalysed reaction is Hydrolysis of Ala-|-Gly bond in repressor LexA.. Represses a number of genes involved in the response to DNA damage (SOS response), including recA and lexA. In the presence of single-stranded DNA, RecA interacts with LexA causing an autocatalytic cleavage which disrupts the DNA-binding part of LexA, leading to derepression of the SOS regulon and eventually DNA repair. This Granulibacter bethesdensis (strain ATCC BAA-1260 / CGDNIH1) protein is LexA repressor.